A 168-amino-acid chain; its full sequence is Phosphopantetheine adenylyltransferase (168 aa).

Residue T14 coordinates substrate. ATP is bound by residues 14-15 (TF) and H22. Residues K46, L78, and R92 each contribute to the substrate site. ATP-binding positions include 93-95 (GLR), E103, and 128-134 (YSFISSS).

Belongs to the bacterial CoaD family. As to quaternary structure, homohexamer. Requires Mg(2+) as cofactor.

It is found in the cytoplasm. The catalysed reaction is (R)-4'-phosphopantetheine + ATP + H(+) = 3'-dephospho-CoA + diphosphate. Its pathway is cofactor biosynthesis; coenzyme A biosynthesis; CoA from (R)-pantothenate: step 4/5. Reversibly transfers an adenylyl group from ATP to 4'-phosphopantetheine, yielding dephospho-CoA (dPCoA) and pyrophosphate. The sequence is that of Phosphopantetheine adenylyltransferase from Xanthomonas campestris pv. campestris (strain 8004).